Here is a 261-residue protein sequence, read N- to C-terminus: Ribosomal RNA small subunit methyltransferase J (261 aa).

S-adenosyl-L-methionine-binding positions include 109–110 (RD), 125–126 (ER), and D179.

Belongs to the methyltransferase superfamily. RsmJ family.

Its subcellular location is the cytoplasm. It carries out the reaction guanosine(1516) in 16S rRNA + S-adenosyl-L-methionine = N(2)-methylguanosine(1516) in 16S rRNA + S-adenosyl-L-homocysteine + H(+). Its function is as follows. Specifically methylates the guanosine in position 1516 of 16S rRNA. In Pseudomonas aeruginosa (strain ATCC 15692 / DSM 22644 / CIP 104116 / JCM 14847 / LMG 12228 / 1C / PRS 101 / PAO1), this protein is Ribosomal RNA small subunit methyltransferase J.